The chain runs to 1267 residues: MSSMILTQFGPFIESISGITDQSNDVFEDAAKAFSMFTRSDVYKALDEIPFSDDAMLPIPPTIYTKPSHDSYYYIDALNRVRRKTYQGPDDVYVPNCSIVELLEPHETLTSYGRLSEAIENRAKDGDSQARIATTYGRIAESQARQIKAPLEKFVLALLVAEAGGSLYDPVLQKYDEIPDLSHNCPLWCFREICRHISGPLPDRAPYLYLSAGVFWLMSPRMTSAIPPLLSDLVNLAILQQTAGLDPSLVKLGVQICLHAAASSSYSWFILKTKSIFPQNTLHSMYESLEGGYCPNLEWLEPRSDYKFMYMGVMPLSAKYARSAPSNDKKARELGEKYGLSSVVGELRKRTKTYVKHDFASVRYIRDAMACTSGIFLVRTPTETVLQEYTQSPEIKVPIPQKDWTGPIGEIRILKDTTSSIARYLYRTWYLAAARMAAQPRTWDPLFQAIMRSQYVTARGGSGAALRESLYAINVSLPDFKGLPVKAATKIFQAAQLANLPFSHTSVAILADTSMGLRNQVQRRPRSIMPLNVPQQQVSAPHTLTADYINYHMNLSPTSGSAVIEKVIPLGVYASSPPNQSINIDISACDASITWDFFLSVIMAAIHEGVASSSIGKPFMGVPASIVNDESVVGVRAARPISGMQNMIQHLSKLYKRGFSYRVNDSFSPGNDFTHMTTTFPSGSTATSTEHTANNSTMMETFLTVWGPEHTDDPDVLRLMKSLTIQRNYVCQGDDGLMIIDGTTAGKVNSETIQNDLELISKYGEEFGWKYDIAYDGTAEYLKLYFIFGCRIPNLSRHPIVGKERANSSAEEPWPAILDQIMGVFFNGVHDGLQWQRWIRYSWALCCAFSRQRTMIGESVGYLQYPMWSFVYWGLPLVKAFGSDPWIFSWYMPTGDLGMYSWISLIRPLMTRWMVANGYVTDRCSTVFGNADYRRCFNELKLYQGYYMAQLPRNPKKSGRAASREVREQFTQALSDYLMQNPELKSRVLRGRSEWEKYGAGIIHNPPSLFDVPHKWYQGAQEAAIATREELAEMDETLMRARRHSYSSFSKLLEAYLLVKWRMCEAREPSVDLRLPLCAGIDPLNSDPFLKMVSVGPMLQSTRKYFAQTLFMAKTVSGLDVNAIDSALLRLRTLGADKKALTAQLLMVGLQESEADALAGKIMLQDVNTVQLARVVNLAVPDTWMSLDFDSMFKHHVKLLPKDGRHLNTDIPPRMGWLRAILRFLGAGMVMTATGVAVDIYLEDIHGGGRSLGQRFMTWMRQEGRSA.

Residues 555–792 (LSPTSGSAVI…KLYFIFGCRI (238 aa)) form the RdRp catalytic domain.

It belongs to the reoviridae RNA-directed RNA polymerase family.

The protein localises to the virion. It catalyses the reaction RNA(n) + a ribonucleoside 5'-triphosphate = RNA(n+1) + diphosphate. RNA-directed RNA polymerase that is involved in transcription and genome replication. Following infection, it catalyzes the synthesis of fully conservative plus strands. After core assembly, which consists in recruitment of one capped plus-strand for each genomic segments and polymerase complexes, the polymerase switches mode and catalyzes the synthesis of complementary minus-strands. This chain is RNA-directed RNA polymerase lambda-3 (L1), found in Reovirus type 3 (strain Dearing) (T3D).